Reading from the N-terminus, the 122-residue chain is uncharacterized protein (122 aa).

This sequence to B.subtilis YpdA.

This is an uncharacterized protein from Bacillus licheniformis.